We begin with the raw amino-acid sequence, 105 residues long: Large ribosomal subunit protein uL24 (105 aa).

The protein belongs to the universal ribosomal protein uL24 family. In terms of assembly, part of the 50S ribosomal subunit.

Functionally, one of two assembly initiator proteins, it binds directly to the 5'-end of the 23S rRNA, where it nucleates assembly of the 50S subunit. Its function is as follows. One of the proteins that surrounds the polypeptide exit tunnel on the outside of the subunit. The sequence is that of Large ribosomal subunit protein uL24 from Sphingopyxis alaskensis (strain DSM 13593 / LMG 18877 / RB2256) (Sphingomonas alaskensis).